We begin with the raw amino-acid sequence, 344 residues long: Dihydroorotase (344 aa).

Residues H13 and H15 each coordinate Zn(2+). Residues 15–17 (HLR) and N41 contribute to the substrate site. Zn(2+) contacts are provided by K98, H135, and H173. K98 carries the post-translational modification N6-carboxylysine. H135 is a substrate binding site. Residue L218 coordinates substrate. D247 provides a ligand contact to Zn(2+). D247 is a catalytic residue. Residues H251 and A263 each coordinate substrate.

This sequence belongs to the metallo-dependent hydrolases superfamily. DHOase family. Class II DHOase subfamily. As to quaternary structure, homodimer. The cofactor is Zn(2+).

It catalyses the reaction (S)-dihydroorotate + H2O = N-carbamoyl-L-aspartate + H(+). The protein operates within pyrimidine metabolism; UMP biosynthesis via de novo pathway; (S)-dihydroorotate from bicarbonate: step 3/3. In terms of biological role, catalyzes the reversible cyclization of carbamoyl aspartate to dihydroorotate. This Neisseria meningitidis serogroup C / serotype 2a (strain ATCC 700532 / DSM 15464 / FAM18) protein is Dihydroorotase.